A 430-amino-acid polypeptide reads, in one-letter code: CinA-like protein (430 aa).

The protein belongs to the CinA family.

The sequence is that of CinA-like protein from Prochlorococcus marinus (strain NATL2A).